Consider the following 306-residue polypeptide: Natural cytotoxicity triggering receptor 1 (306 aa).

The N-terminal stretch at 1–21 (MSSTLRALLCLGLCLSQRISA) is a signal peptide. Residues 22 to 257 (PKQTLPKPII…WDHTAQNLLR (236 aa)) lie on the Extracellular side of the membrane. Ig-like domains lie at 42–100 (EKQA…SCIY) and 137–192 (GEKV…RCFG). Disulfide bonds link Cys49–Cys98 and Cys144–Cys190. Asn216 carries N-linked (GlcNAc...) asparagine glycosylation. The helical transmembrane segment at 258-278 (MGLAFLVLVALVCLLVEDWLS) threads the bilayer. Residues 279 to 306 (RKRTREQASRASTWEGRRRLNKHKDSEE) are Cytoplasmic-facing.

It belongs to the natural cytotoxicity receptor (NCR) family. In terms of assembly, interacts with CD3Z and FCER1G. Expressed in NK cells.

It localises to the cell membrane. Its function is as follows. Cytotoxicity-activating receptor that may contribute to the increased efficiency of activated natural killer (NK) cells to mediate tumor cell lysis. The protein is Natural cytotoxicity triggering receptor 1 (NCR1) of Macaca fascicularis (Crab-eating macaque).